We begin with the raw amino-acid sequence, 335 residues long: Peroxidase 2 (335 aa).

The N-terminal stretch at 1–29 (MAAATAPKTMPSSVFAAALLLLAAAACQA) is a signal peptide. 4 disulfide bridges follow: cysteine 44/cysteine 125, cysteine 77/cysteine 82, cysteine 131/cysteine 329, and cysteine 212/cysteine 238. Catalysis depends on histidine 75, which acts as the Proton acceptor. The Ca(2+) site is built by aspartate 76, valine 79, glycine 81, aspartate 83, and serine 85. 2 N-linked (GlcNAc...) asparagine glycosylation sites follow: asparagine 166 and asparagine 180. Histidine 205 contributes to the heme b binding site. Position 206 (threonine 206) interacts with Ca(2+). N-linked (GlcNAc...) asparagine glycosylation occurs at asparagine 241. Ca(2+) is bound by residues aspartate 253, threonine 256, and aspartate 261.

This sequence belongs to the peroxidase family. Classical plant (class III) peroxidase subfamily. Heme b is required as a cofactor. The cofactor is Ca(2+). Expressed in the elongating region of young roots, and in root vascular tissues and epidermis.

The protein localises to the secreted. The enzyme catalyses 2 a phenolic donor + H2O2 = 2 a phenolic radical donor + 2 H2O. Its function is as follows. Removal of H(2)O(2), oxidation of toxic reductants, biosynthesis and degradation of lignin, suberization, auxin catabolism, response to environmental stresses such as wounding, pathogen attack and oxidative stress. These functions might be dependent on each isozyme/isoform in each plant tissue. In Zea mays (Maize), this protein is Peroxidase 2 (PER2).